A 294-amino-acid polypeptide reads, in one-letter code: Universal stress protein MSMEG_3950/MSMEI_3859 (294 aa).

Gly13 lines the ATP pocket. Lys109 participates in a covalent cross-link: Isoglutamyl lysine isopeptide (Lys-Gln) (interchain with Q-Cter in protein Pup). Residues 117-123 (GNRGMGA), 131-132 (ST), Gly164, Asp197, 261-267 (GSHGRGG), and 275-277 (SVS) each bind ATP.

It belongs to the universal stress protein A family.

The sequence is that of Universal stress protein MSMEG_3950/MSMEI_3859 from Mycolicibacterium smegmatis (strain ATCC 700084 / mc(2)155) (Mycobacterium smegmatis).